We begin with the raw amino-acid sequence, 38 residues long: Photosystem II reaction center protein L (38 aa).

Residues 17 to 37 form a helical membrane-spanning segment; it reads SLYWGLLLIFVLAILFSSYIF.

The protein belongs to the PsbL family. In terms of assembly, PSII is composed of 1 copy each of membrane proteins PsbA, PsbB, PsbC, PsbD, PsbE, PsbF, PsbH, PsbI, PsbJ, PsbK, PsbL, PsbM, PsbT, PsbX, PsbY, PsbZ, Psb30/Ycf12, at least 3 peripheral proteins of the oxygen-evolving complex and a large number of cofactors. It forms dimeric complexes.

It localises to the plastid. The protein localises to the chloroplast thylakoid membrane. Its function is as follows. One of the components of the core complex of photosystem II (PSII). PSII is a light-driven water:plastoquinone oxidoreductase that uses light energy to abstract electrons from H(2)O, generating O(2) and a proton gradient subsequently used for ATP formation. It consists of a core antenna complex that captures photons, and an electron transfer chain that converts photonic excitation into a charge separation. This subunit is found at the monomer-monomer interface and is required for correct PSII assembly and/or dimerization. This Mesostigma viride (Green alga) protein is Photosystem II reaction center protein L.